Here is a 466-residue protein sequence, read N- to C-terminus: ATP synthase subunit beta (466 aa).

156–163 (GGAGVGKT) contributes to the ATP binding site.

It belongs to the ATPase alpha/beta chains family. In terms of assembly, F-type ATPases have 2 components, CF(1) - the catalytic core - and CF(0) - the membrane proton channel. CF(1) has five subunits: alpha(3), beta(3), gamma(1), delta(1), epsilon(1). CF(0) has three main subunits: a(1), b(2) and c(9-12). The alpha and beta chains form an alternating ring which encloses part of the gamma chain. CF(1) is attached to CF(0) by a central stalk formed by the gamma and epsilon chains, while a peripheral stalk is formed by the delta and b chains.

The protein localises to the cell membrane. It carries out the reaction ATP + H2O + 4 H(+)(in) = ADP + phosphate + 5 H(+)(out). Produces ATP from ADP in the presence of a proton gradient across the membrane. The catalytic sites are hosted primarily by the beta subunits. This chain is ATP synthase subunit beta, found in Buchnera aphidicola subsp. Schizaphis graminum (strain Sg).